The chain runs to 354 residues: Guanine nucleotide-binding protein G(i) subunit alpha-1 (354 aa).

The N-myristoyl glycine moiety is linked to residue Gly-2. Cys-3 carries S-palmitoyl cysteine lipidation. In terms of domain architecture, G-alpha spans Arg-32 to Phe-354. Residues Lys-35–Thr-48 form a G1 motif region. GTP contacts are provided by residues Glu-43–Thr-48, Asp-150–Ser-151, and Leu-175–Arg-178. Ser-47 is a Mg(2+) binding site. The segment at Asp-173–Thr-181 is G2 motif. Thr-181 is a Mg(2+) binding site. Residues Phe-196–Arg-205 form a G3 motif region. GTP-binding positions include Asp-200–Gln-204, Asn-269–Asp-272, and Ala-326. Residues Ile-265 to Asp-272 form a G4 motif region. The segment at Thr-324–Thr-329 is G5 motif.

Belongs to the G-alpha family. G(i/o/t/z) subfamily. In terms of assembly, heterotrimeric G proteins are composed of 3 units; alpha, beta and gamma. The alpha chain contains the guanine nucleotide binding site. Part of a spindle orientation complex at least composed of GNAI1, GPSM2 and NUMA1. Identified in complex with the beta subunit GNB1 and the gamma subunit GNG1. Identified in complex with the beta subunit GNB1 and the gamma subunit GNG2. Component of the TAS2R14-GNAI1 complex, consisting of TAS2R14, GNAI1, GNB1 and GNG2; within the complex interacts with TAS2R14; this complex plays a role in the perception of bitterness. GTP binding causes dissociation of the heterotrimer, liberating the individual subunits so that they can interact with downstream effector proteins. Interacts (GDP-bound form) with GPSM1; this inhibits guanine nucleotide exchange and GTP binding. Interacts (GDP-bound form) with GPSM2 (via GoLoco domains); this inhibits guanine nucleotide exchange. Interacts with RGS10; this strongly enhances GTP hydrolysis. Interacts with RGS1 and RGS16. Interacts with RGS4. Interacts with RGS12. Interacts (via active GTP- or inactive GDP-bound forms) with RGS14 (via RGS and GoLoco domains). Interacts with RGS3, RGS6, RGS7, RGS8, RGS17, RGS18 and RGS20 (in vitro). Interacts (GDP-bound form) with RIC8A (via C-terminus); promoting GNAI1 folding and association with the plasma membrane. Interacts (inactive GDP-bound form) with NUCB1 (via GBA motif); the interaction leads to activation of GNAI1. Interacts (inactive GDP-bound form) with CCDC88C/DAPLE (via GBA motif); the interaction leads to activation of GNAI1. Interacts (inactive GDP-bound form) with CCDC8A/GIV (via GBA motif). Interacts with GPR15. In terms of processing, myristoylation at Gly-2 is required for membrane anchoring before palmitoylation. Palmitoylation at Cys-3 varies with membrane lipid composition.

Its subcellular location is the nucleus. The protein resides in the cytoplasm. The protein localises to the cell membrane. It localises to the cytoskeleton. It is found in the microtubule organizing center. Its subcellular location is the centrosome. The protein resides in the cell cortex. The protein localises to the membrane. The catalysed reaction is GTP + H2O = GDP + phosphate + H(+). Its function is as follows. Guanine nucleotide-binding proteins (G proteins) function as transducers downstream of G protein-coupled receptors (GPCRs) in numerous signaling cascades. The alpha chain contains the guanine nucleotide binding site and alternates between an active, GTP-bound state and an inactive, GDP-bound state. Signaling by an activated GPCR promotes GDP release and GTP binding. The alpha subunit has a low GTPase activity that converts bound GTP to GDP, thereby terminating the signal. Both GDP release and GTP hydrolysis are modulated by numerous regulatory proteins. Signaling is mediated via effector proteins, such as adenylate cyclase. Inhibits adenylate cyclase activity of ADCY1, ADCY5 and ADCY6, leading to decreased intracellular cAMP levels. The inactive GDP-bound form prevents the association of RGS14 with centrosomes and is required for the translocation of RGS14 from the cytoplasm to the plasma membrane. Required for normal cytokinesis during mitosis. Required for cortical dynein-dynactin complex recruitment during metaphase. The polypeptide is Guanine nucleotide-binding protein G(i) subunit alpha-1 (Gnai1) (Rattus norvegicus (Rat)).